The sequence spans 283 residues: uncharacterized protein (283 aa).

The Proton donor role is filled by Tyr55.

It belongs to the aldo/keto reductase family.

It is found in the cytoplasm. The protein localises to the nucleus. This is an uncharacterized protein from Schizosaccharomyces pombe (strain 972 / ATCC 24843) (Fission yeast).